Consider the following 340-residue polypeptide: Anthranilate phosphoribosyltransferase (340 aa).

5-phospho-alpha-D-ribose 1-diphosphate contacts are provided by residues G79, G82–D83, T87, N89–T92, K107–G115, and S119. Residue G79 coordinates anthranilate. S91 lines the Mg(2+) pocket. N110 provides a ligand contact to anthranilate. An anthranilate-binding site is contributed by R165. Residues D224 and E225 each coordinate Mg(2+).

It belongs to the anthranilate phosphoribosyltransferase family. In terms of assembly, homodimer. Mg(2+) is required as a cofactor.

It catalyses the reaction N-(5-phospho-beta-D-ribosyl)anthranilate + diphosphate = 5-phospho-alpha-D-ribose 1-diphosphate + anthranilate. It functions in the pathway amino-acid biosynthesis; L-tryptophan biosynthesis; L-tryptophan from chorismate: step 2/5. Its function is as follows. Catalyzes the transfer of the phosphoribosyl group of 5-phosphorylribose-1-pyrophosphate (PRPP) to anthranilate to yield N-(5'-phosphoribosyl)-anthranilate (PRA). In Syntrophomonas wolfei subsp. wolfei (strain DSM 2245B / Goettingen), this protein is Anthranilate phosphoribosyltransferase.